The primary structure comprises 444 residues: Tol-Pal system protein TolB (444 aa).

A signal peptide spans 1–19 (MRNIIYFILSLLFSVTSYA).

This sequence belongs to the TolB family. In terms of assembly, the Tol-Pal system is composed of five core proteins: the inner membrane proteins TolA, TolQ and TolR, the periplasmic protein TolB and the outer membrane protein Pal. They form a network linking the inner and outer membranes and the peptidoglycan layer.

Its subcellular location is the periplasm. Part of the Tol-Pal system, which plays a role in outer membrane invagination during cell division and is important for maintaining outer membrane integrity. The sequence is that of Tol-Pal system protein TolB from Rickettsia rickettsii (strain Iowa).